A 534-amino-acid chain; its full sequence is Cytochrome P450 monooxygenase vrtK (534 aa).

Residue Cys-448 participates in heme binding.

It belongs to the cytochrome P450 family. The cofactor is heme.

The protein operates within secondary metabolite biosynthesis; terpenoid biosynthesis. Functionally, cytochrome P450 monooxygenase; part of the gene cluster that mediates the biosynthesis of viridicatumtoxin, a tetracycline-like fungal meroterpenoid with a unique, fused spirobicyclic ring system. The first step of the pathway is the production of the malonamoyl-CoA starter unit for the polyketide synthase vrtA. The aldolase vrtJ may be involved in the synthesis of the malonamate substrate for malonamoyl-CoA synthetase vrtB. The polyketide synthase vrtA then may utilize the malonamoyl-CoA starter unit, followed by sequential condensation of eight malonyl-CoA units to form the polyketide backbone. The cyclization of the last ring could be mediated by the lactamase-like protein vrtG. The proposed post-PKS tailoring steps are a hydroxylation at C5 catalyzed the cytochrome P450 monooxygenase vrtE, a hydroxylation at C12a catalyzed by VrtH and/or VrtI, and an O-methylation by the O-methyltransferase vrtF. VrtC is then proposed to catalyze the transfer of a geranyl group synthesized by vrtD to the aromatic C ring of the tetracyclic polyketide intermediate of viridicatumtoxin to yield previridicatumtoxin. Finally, the cytochrome P450 monooxygenase vrtK catalyzes the spirocyclization of the geranyl moiety of previridicatumtoxin to afford viridicatumtoxin. The sequence is that of Cytochrome P450 monooxygenase vrtK from Penicillium aethiopicum.